The chain runs to 366 residues: Chorismate synthase (366 aa).

Arg47 provides a ligand contact to NADP(+). Residues 124-126 (RSS), Gly286, 301-305 (KPVAT), and Arg327 contribute to the FMN site.

The protein belongs to the chorismate synthase family. In terms of assembly, homotetramer. FMNH2 is required as a cofactor.

The enzyme catalyses 5-O-(1-carboxyvinyl)-3-phosphoshikimate = chorismate + phosphate. The protein operates within metabolic intermediate biosynthesis; chorismate biosynthesis; chorismate from D-erythrose 4-phosphate and phosphoenolpyruvate: step 7/7. Its function is as follows. Catalyzes the anti-1,4-elimination of the C-3 phosphate and the C-6 proR hydrogen from 5-enolpyruvylshikimate-3-phosphate (EPSP) to yield chorismate, which is the branch point compound that serves as the starting substrate for the three terminal pathways of aromatic amino acid biosynthesis. This reaction introduces a second double bond into the aromatic ring system. In Methylacidiphilum infernorum (isolate V4) (Methylokorus infernorum (strain V4)), this protein is Chorismate synthase.